The following is a 454-amino-acid chain: Aminodeoxychorismate synthase component 1 (454 aa).

Residues S37, 44–47, and 241–243 contribute to the L-tryptophan site; these read YNRF and PFS. E259 acts as the Proton donor in catalysis. K275 (N6-(4-deoxychorismate)-lysine intermediate) is an active-site residue.

This sequence belongs to the anthranilate synthase component I family. Monomer. Heterodimer consisting of two non-identical subunits: a glutamine amidotransferase subunit (PabA) and a aminodeoxychorismate synthase subunit (PabB). It depends on Mg(2+) as a cofactor.

It catalyses the reaction chorismate + L-glutamine = 4-amino-4-deoxychorismate + L-glutamate. The protein operates within cofactor biosynthesis; tetrahydrofolate biosynthesis; 4-aminobenzoate from chorismate: step 1/2. Its function is as follows. Part of a heterodimeric complex that catalyzes the two-step biosynthesis of 4-amino-4-deoxychorismate (ADC), a precursor of p-aminobenzoate (PABA) and tetrahydrofolate. In the first step, a glutamine amidotransferase (PabA) generates ammonia as a substrate that, along with chorismate, is used in the second step, catalyzed by aminodeoxychorismate synthase (PabB) to produce ADC. The sequence is that of Aminodeoxychorismate synthase component 1 (pabB) from Salmonella typhimurium (strain LT2 / SGSC1412 / ATCC 700720).